The sequence spans 731 residues: Dynein axonemal intermediate chain 7 (731 aa).

2 disordered regions span residues 1-50 and 285-320; these read MPPK…NERL and QNTE…VRSE. Composition is skewed to basic and acidic residues over residues 17-50 and 296-320; these read KAEK…NERL and GKME…VRSE.

This sequence belongs to the DNAI7 family. As to quaternary structure, part of the multisubunit axonemal dynein complex formed at least of two heavy chains and a number of intermediate and light chains.

The protein localises to the cell projection. It localises to the cilium. The protein resides in the cytoplasm. Its function is as follows. Via its association with the multisubunit axonemal dynein complex, may be potentially involved in the regulation of cilia function. The protein is Dynein axonemal intermediate chain 7 (dnai7) of Danio rerio (Zebrafish).